The primary structure comprises 554 residues: 5'-AMP-activated protein kinase catalytic subunit alpha-1 (554 aa).

In terms of domain architecture, Protein kinase spans 22–274 (YILGDTLGVG…IKDIREHEWF (253 aa)). Thr27 is subject to Phosphothreonine. Residues 28-36 (LGVGTFGKV) and Lys51 contribute to the ATP site. Asp145 acts as the Proton acceptor in catalysis. The residue at position 178 (Thr178) is a Phosphothreonine; by LKB1 and CaMKK2. 2 positions are modified to phosphothreonine: Thr264 and Thr350. The interval 297 to 376 (EALKEVCEKF…PERVPFLVAE (80 aa)) is AIS. Ser351 carries the phosphoserine modification. Ser355 bears the Phosphoserine; by ULK1 mark. Phosphothreonine; by ULK1 is present on Thr363. Thr377 is subject to Phosphothreonine. Ser392 is modified (phosphoserine; by ULK1). Ser462 carries the phosphoserine modification. Polar residues predominate over residues 480–500 (KSGTATPQRSGSVSNYRSCQR). Residues 480-531 (KSGTATPQRSGSVSNYRSCQRSDSDAEAQGKSSEVSLTSSVTSLDSSPVDLT) form a disordered region. Ser481 is modified (phosphoserine; by ULK1). Thr483 bears the Phosphothreonine; by ULK1 mark. Thr485 is modified (phosphothreonine). A phosphoserine mark is found at Ser491, Ser503, Ser519, and Ser522. Positions 511–530 (SSEVSLTSSVTSLDSSPVDL) are enriched in low complexity.

Belongs to the protein kinase superfamily. CAMK Ser/Thr protein kinase family. SNF1 subfamily. In terms of assembly, AMPK is a heterotrimer of an alpha catalytic subunit (PRKAA1 or PRKAA2), a beta (PRKAB1 or PRKAB2) and a gamma non-catalytic subunits (PRKAG1, PRKAG2 or PRKAG3). Interacts with FNIP1 and FNIP2. It depends on Mg(2+) as a cofactor. In terms of processing, ubiquitinated. Phosphorylated at Thr-183 by STK11/LKB1 in complex with STE20-related adapter-alpha (STRADA) pseudo kinase and CAB39. Also phosphorylated at Thr-183 by CAMKK2; triggered by a rise in intracellular calcium ions, without detectable changes in the AMP/ATP ratio. CAMKK1 can also phosphorylate Thr-183, but at a much lower level. Dephosphorylated by protein phosphatase 2A and 2C (PP2A and PP2C). Phosphorylated by ULK1 and ULK2; leading to negatively regulate AMPK activity and suggesting the existence of a regulatory feedback loop between ULK1, ULK2 and AMPK. Dephosphorylated by PPM1A and PPM1B. Post-translationally, glycosylated; O-GlcNAcylated by OGT, promoting the AMP-activated protein kinase (AMPK) activity.

The protein localises to the cytoplasm. The protein resides in the nucleus. The enzyme catalyses L-seryl-[protein] + ATP = O-phospho-L-seryl-[protein] + ADP + H(+). It carries out the reaction L-threonyl-[protein] + ATP = O-phospho-L-threonyl-[protein] + ADP + H(+). The catalysed reaction is L-seryl-[acetyl-CoA carboxylase] + ATP = O-phospho-L-seryl-[acetyl-CoA carboxylase] + ADP + H(+). It catalyses the reaction L-seryl-[3-hydroxy-3-methylglutaryl-coenzyme A reductase] + ATP = O-phospho-L-seryl-[3-hydroxy-3-methylglutaryl-coenzyme A reductase] + ADP + H(+). The enzyme catalyses L-seryl-[tau protein] + ATP = O-phospho-L-seryl-[tau protein] + ADP + H(+). It carries out the reaction L-threonyl-[tau protein] + ATP = O-phospho-L-threonyl-[tau protein] + ADP + H(+). Its activity is regulated as follows. Activated by phosphorylation on Thr-183. Binding of AMP to non-catalytic gamma subunit (PRKAG1, PRKAG2 or PRKAG3) results in allosteric activation, inducing phosphorylation on Thr-183. AMP-binding to gamma subunit also sustains activity by preventing dephosphorylation of Thr-183. ADP also stimulates Thr-183 phosphorylation, without stimulating already phosphorylated AMPK. ATP promotes dephosphorylation of Thr-183, rendering the enzyme inactive. Under physiological conditions AMPK mainly exists in its inactive form in complex with ATP, which is much more abundant than AMP. Selectively inhibited by compound C (6-[4-(2-Piperidin-1-yl-ethoxy)-phenyl)]-3-pyridin-4-yl-pyyrazolo[1,5-a] pyrimidine. Activated by resveratrol, a natural polyphenol present in red wine, and S17834, a synthetic polyphenol. Catalytic subunit of AMP-activated protein kinase (AMPK), an energy sensor protein kinase that plays a key role in regulating cellular energy metabolism. In response to reduction of intracellular ATP levels, AMPK activates energy-producing pathways and inhibits energy-consuming processes: inhibits protein, carbohydrate and lipid biosynthesis, as well as cell growth and proliferation. AMPK acts via direct phosphorylation of metabolic enzymes, and by longer-term effects via phosphorylation of transcription regulators. Regulates lipid synthesis by phosphorylating and inactivating lipid metabolic enzymes such as ACACA, ACACB, GYS1, HMGCR and LIPE; regulates fatty acid and cholesterol synthesis by phosphorylating acetyl-CoA carboxylase (ACACA and ACACB) and hormone-sensitive lipase (LIPE) enzymes, respectively. Promotes lipolysis of lipid droplets by mediating phosphorylation of isoform 1 of CHKA (CHKalpha2). Regulates insulin-signaling and glycolysis by phosphorylating IRS1, PFKFB2 and PFKFB3. AMPK stimulates glucose uptake in muscle by increasing the translocation of the glucose transporter SLC2A4/GLUT4 to the plasma membrane, possibly by mediating phosphorylation of TBC1D4/AS160. Regulates transcription and chromatin structure by phosphorylating transcription regulators involved in energy metabolism such as CRTC2/TORC2, FOXO3, histone H2B, HDAC5, MEF2C, MLXIPL/ChREBP, EP300, HNF4A, p53/TP53, SREBF1, SREBF2 and PPARGC1A. Acts as a key regulator of glucose homeostasis in liver by phosphorylating CRTC2/TORC2, leading to CRTC2/TORC2 sequestration in the cytoplasm. In response to stress, phosphorylates 'Ser-36' of histone H2B (H2BS36ph), leading to promote transcription. Acts as a key regulator of cell growth and proliferation by phosphorylating FNIP1, TSC2, RPTOR, WDR24 and ATG1/ULK1: in response to nutrient limitation, negatively regulates the mTORC1 complex by phosphorylating RPTOR component of the mTORC1 complex and by phosphorylating and activating TSC2. Also phosphorylates and inhibits GATOR2 subunit WDR24 in response to nutrient limitation, leading to suppress glucose-mediated mTORC1 activation. In response to energetic stress, phosphorylates FNIP1, inactivating the non-canonical mTORC1 signaling, thereby promoting nuclear translocation of TFEB and TFE3, and inducing transcription of lysosomal or autophagy genes. In response to nutrient limitation, promotes autophagy by phosphorylating and activating ATG1/ULK1. In that process also activates WDR45/WIPI4. Phosphorylates CASP6, thereby preventing its autoprocessing and subsequent activation. In response to nutrient limitation, phosphorylates transcription factor FOXO3 promoting FOXO3 mitochondrial import. Also acts as a regulator of cellular polarity by remodeling the actin cytoskeleton; probably by indirectly activating myosin. AMPK also acts as a regulator of circadian rhythm by mediating phosphorylation of CRY1, leading to destabilize it. May regulate the Wnt signaling pathway by phosphorylating CTNNB1, leading to stabilize it. Also has tau-protein kinase activity: in response to amyloid beta A4 protein (APP) exposure, activated by CAMKK2, leading to phosphorylation of MAPT/TAU; however the relevance of such data remains unclear in vivo. Also phosphorylates CFTR, EEF2K, KLC1, NOS3 and SLC12A1. Regulates hepatic lipogenesis. Activated via SIRT3, represses sterol regulatory element-binding protein (SREBP) transcriptional activities and ATP-consuming lipogenesis to restore cellular energy balance. Upon stress, regulates mitochondrial fragmentation through phosphorylation of MTFR1L. This Pongo abelii (Sumatran orangutan) protein is 5'-AMP-activated protein kinase catalytic subunit alpha-1 (PRKAA1).